Here is a 124-residue protein sequence, read N- to C-terminus: Protein BEX3 (124 aa).

A disordered region spans residues 1–56; it reads MANVHQENEEMEQPLQNGQEDRPVGGGEGHQPAANNNNNNHNHNHNHHRRGQARRL. Basic residues predominate over residues 42-53; that stretch reads NHNHNHHRRGQA. Residues 81–106 are interaction with p75NTR/NGFR; the sequence is EMFMEEMREIRRKLRELQLRNCLRIL. The tract at residues 81–124 is interaction with 14-3-3 epsilon; that stretch reads EMFMEEMREIRRKLRELQLRNCLRILMGELSNHHDHHDEFCLMP. A Nuclear export signal motif is present at residues 90–100; it reads IRRKLRELQLR. The tract at residues 113-117 is his cluster; that stretch reads HHDHH. Cys-121 provides a ligand contact to Zn(2+).

Belongs to the BEX family. Self-associates. Binds to the DEATH domain of p75NTR/NGFR. Interacts with 14-3-3 epsilon (YWHAE). Interacts with DIABLO/SMAC. Ubiquitinated. Degraded by the proteasome. As to expression, widely expressed.

It localises to the nucleus. Its subcellular location is the cytoplasm. It is found in the cytosol. May be a signaling adapter molecule involved in NGFR/p75NTR-mediated apoptosis induced by NGF. Plays a role in zinc-triggered neuronal death. In absence of reductive stress, acts as a pseudosubstrate for the CRL2(FEM1B) complex: associates with FEM1B via zinc, thereby preventing association between FEM1B and its substrates. The sequence is that of Protein BEX3 from Mus musculus (Mouse).